The following is a 482-amino-acid chain: tRNA sulfurtransferase (482 aa).

Residues Q61–H165 form the THUMP domain. Residues L183–I184, K265, G287, and Q296 each bind ATP. A disulfide bridge links C344 with C456. In terms of domain architecture, Rhodanese spans I404 to P482. C456 functions as the Cysteine persulfide intermediate in the catalytic mechanism.

It belongs to the ThiI family.

The protein localises to the cytoplasm. It catalyses the reaction [ThiI sulfur-carrier protein]-S-sulfanyl-L-cysteine + a uridine in tRNA + 2 reduced [2Fe-2S]-[ferredoxin] + ATP + H(+) = [ThiI sulfur-carrier protein]-L-cysteine + a 4-thiouridine in tRNA + 2 oxidized [2Fe-2S]-[ferredoxin] + AMP + diphosphate. The enzyme catalyses [ThiS sulfur-carrier protein]-C-terminal Gly-Gly-AMP + S-sulfanyl-L-cysteinyl-[cysteine desulfurase] + AH2 = [ThiS sulfur-carrier protein]-C-terminal-Gly-aminoethanethioate + L-cysteinyl-[cysteine desulfurase] + A + AMP + 2 H(+). It functions in the pathway cofactor biosynthesis; thiamine diphosphate biosynthesis. Catalyzes the ATP-dependent transfer of a sulfur to tRNA to produce 4-thiouridine in position 8 of tRNAs, which functions as a near-UV photosensor. Also catalyzes the transfer of sulfur to the sulfur carrier protein ThiS, forming ThiS-thiocarboxylate. This is a step in the synthesis of thiazole, in the thiamine biosynthesis pathway. The sulfur is donated as persulfide by IscS. The protein is tRNA sulfurtransferase of Vibrio vulnificus (strain YJ016).